The sequence spans 502 residues: Betaine aldehyde dehydrogenase, chloroplastic (502 aa).

The N-terminal 7 residues, Met-1–Ala-7, are a transit peptide targeting the chloroplast. Gly-240–Gly-245 provides a ligand contact to NAD(+). Glu-262 acts as the Proton acceptor in catalysis. The Nucleophile role is filled by Cys-296.

The protein belongs to the aldehyde dehydrogenase family. In terms of assembly, homodimer.

Its subcellular location is the plastid. The protein localises to the chloroplast. It carries out the reaction betaine aldehyde + NAD(+) + H2O = glycine betaine + NADH + 2 H(+). Its pathway is amine and polyamine biosynthesis; betaine biosynthesis via choline pathway; betaine from betaine aldehyde: step 1/1. The protein is Betaine aldehyde dehydrogenase, chloroplastic of Atriplex hortensis (Mountain spinach).